The following is a 623-amino-acid chain: Leucine-rich repeat, immunoglobulin-like domain and transmembrane domain-containing protein 1 (623 aa).

The signal sequence occupies residues 1–21 (MWVALGMLWLLALGGPHQAWS). In terms of domain architecture, LRRNT spans 22-59 (FCPSQCSCSLHILSDGSKARTVVCSDPDLTLPPASIPP). Residues 22–526 (FCPSQCSCSL…EVVDAEGTQR (505 aa)) lie on the Lumenal side of the membrane. LRR repeat units lie at residues 60–81 (DTCK…TFRP), 84–105 (RLEQ…MLRG), 108–128 (RLRE…AALK), 132–153 (QLQL…AVHF), and 156–177 (NLTF…LLDT). N-linked (GlcNAc...) asparagine glycosylation occurs at Asn-156. The LRRCT domain maps to 201 to 253 (NPWVCDCRLYDLVHLLDGWASNLIFIEARLRCGSPRSLAGVAFSQLELRKCQS). The Ig-like C2-type domain occupies 266–332 (PLGSTVLLRC…SGDYICQAKN (67 aa)). A disulfide bridge links Cys-275 with Cys-328. N-linked (GlcNAc...) asparagine glycosylation is found at Asn-296 and Asn-455. Residues 430–518 (MVRSLKVVGD…QCVIFSTDEV (89 aa)) form the Fibronectin type-III domain. Residues 525 to 548 (QRLINMVVISVAAIIALPPTLLVC) form an LRR 6 repeat. A helical transmembrane segment spans residues 527–547 (LINMVVISVAAIIALPPTLLV). Residues 548–623 (CCGALRRRCH…GGRRINEYFC (76 aa)) are Cytoplasmic-facing.

As to quaternary structure, homodimer. Interacts with LRIT2; may form a heterodimer with LRIT2. Interacts (via its N-terminal extracellular domain) with metabotropic glutamate receptor GRM6. Interacts (via its extreme C-terminus) with the scaffold protein FRMPD2 (via the third PDZ domain); the interaction leads to their colocalization in photoreceptor synapses. As to expression, retina, outer segments of photoreceptor cells.

The protein localises to the endoplasmic reticulum membrane. It is found in the cell projection. The protein resides in the dendrite. Functionally, photoreceptor synaptic protein essential for normal vision. Involved in synapse formation in cone photoreceptor cells. This is Leucine-rich repeat, immunoglobulin-like domain and transmembrane domain-containing protein 1 (Lrit1) from Rattus norvegicus (Rat).